The chain runs to 36 residues: MKVGIMGGTGNIGEGLARRIXIGGKYDVMIKGRDKA.

9-12 (TGNI) is a binding site for NADP(+).

Belongs to the F420-dependent NADP reductase family. Homotetramer.

The catalysed reaction is reduced coenzyme F420-(gamma-L-Glu)(n) + NADP(+) = oxidized coenzyme F420-(gamma-L-Glu)(n) + NADPH + 2 H(+). Catalyzes the reduction of NADP(+) with F420H(2) via hydride transfer, and the reverse reaction, i.e. the reduction of F420 with NADPH. In M.organophilum, an alcohol-fermenting methanogen containing an NADP-dependent alcohol dehydrogenase, is probably involved in the regeneration of F420H(2) required for CO(2) reduction to methane. Thus, during growth on alcohol and CO(2), the F420-dependent NADP reductase probably has the function of coupling the NADP-dependent oxidation of the alcohol to the aldehyde with the F420-dependent reduction of CO(2) to methane. The polypeptide is F420-dependent NADP reductase (fno) (Methanogenium organophilum).